A 267-amino-acid polypeptide reads, in one-letter code: Putative methylsterol monooxygenase DDB_G0270946 (267 aa).

The next 3 helical transmembrane spans lie at 31–51 (FIAH…ADFI), 72–92 (YCAI…MYIF), and 110–130 (IPYL…YFYW). Residues 119 to 249 (SSFIIEDFYF…FTYLDKIFGT (131 aa)) enclose the Fatty acid hydroxylase domain. A Histidine box-1 motif is present at residues 132–136 (HRALH). Residues 145–149 (HKVHH) carry the Histidine box-2 motif. Positions 224-230 (FHDYHHE) match the Histidine box-3 motif.

The protein belongs to the sterol desaturase family. Requires Fe cation as cofactor.

It localises to the endoplasmic reticulum membrane. It carries out the reaction 4,4-dimethyl-5alpha-cholest-7-en-3beta-ol + 6 Fe(II)-[cytochrome b5] + 3 O2 + 5 H(+) = 4alpha-carboxy-4beta-methyl-5alpha-cholest-7-ene-3beta-ol + 6 Fe(III)-[cytochrome b5] + 4 H2O. The protein operates within steroid biosynthesis; zymosterol biosynthesis; zymosterol from lanosterol: step 3/6. The polypeptide is Putative methylsterol monooxygenase DDB_G0270946 (Dictyostelium discoideum (Social amoeba)).